Consider the following 155-residue polypeptide: Putative pre-16S rRNA nuclease (155 aa).

It belongs to the YqgF nuclease family.

It is found in the cytoplasm. Its function is as follows. Could be a nuclease involved in processing of the 5'-end of pre-16S rRNA. The protein is Putative pre-16S rRNA nuclease of Xanthomonas campestris pv. campestris (strain B100).